The chain runs to 497 residues: L-asparagine permease (497 aa).

12 helical membrane-spanning segments follow: residues 34-54, 58-78, 109-129, 146-166, 171-191, 219-239, 264-284, 298-318, 353-373, 378-398, 422-442, and 448-468; these read QVQM…GAGA, MAGP…FFIL, VAGW…ITAV, VFAL…VKWF, FWFA…GTIF, LLPA…IELV, IGLF…WNAY, LGVP…ALSS, YAGI…NYLV, FEIV…FIMV, APFT…LMAF, and TYTI…WFGV.

Belongs to the amino acid-polyamine-organocation (APC) superfamily. Amino acid transporter (AAT) (TC 2.A.3.1) family.

It is found in the cell inner membrane. The polypeptide is L-asparagine permease (ansP) (Salmonella typhimurium (strain LT2 / SGSC1412 / ATCC 700720)).